We begin with the raw amino-acid sequence, 167 residues long: EF-hand calcium-binding domain-containing protein 11 (167 aa).

3 EF-hand domains span residues 17–52 (AERK…LFGY), 91–126 (DPYE…VAPR), and 127–162 (LQER…GLAN). The Ca(2+) site is built by aspartate 140, aspartate 142, aspartate 144, histidine 146, and aspartate 151.

The polypeptide is EF-hand calcium-binding domain-containing protein 11 (efcab11) (Danio rerio (Zebrafish)).